The following is a 314-amino-acid chain: tRNA dimethylallyltransferase (314 aa).

Residue Gly-12–Thr-19 coordinates ATP. Thr-14 to Thr-19 lines the substrate pocket. 2 interaction with substrate tRNA regions span residues Asp-37 to Gln-40 and Gln-161 to Arg-165.

This sequence belongs to the IPP transferase family. In terms of assembly, monomer. Mg(2+) serves as cofactor.

The enzyme catalyses adenosine(37) in tRNA + dimethylallyl diphosphate = N(6)-dimethylallyladenosine(37) in tRNA + diphosphate. In terms of biological role, catalyzes the transfer of a dimethylallyl group onto the adenine at position 37 in tRNAs that read codons beginning with uridine, leading to the formation of N6-(dimethylallyl)adenosine (i(6)A). The sequence is that of tRNA dimethylallyltransferase from Nitrosococcus oceani (strain ATCC 19707 / BCRC 17464 / JCM 30415 / NCIMB 11848 / C-107).